The sequence spans 201 residues: Anthranilate synthase component 2 (201 aa).

The Glutamine amidotransferase type-1 domain occupies 2 to 201; the sequence is KVLILDNYDS…KCLLRNFINS (200 aa). Position 59–61 (59–61) interacts with L-glutamine; the sequence is GPG. The Nucleophile; for GATase activity role is filled by cysteine 89. L-glutamine-binding positions include glutamine 93 and 139–140; that span reads SL. Residues histidine 182 and glutamate 184 each act as for GATase activity in the active site.

Heterotetramer consisting of two non-identical subunits: a beta subunit (TrpG) and a large alpha subunit (TrpE).

It catalyses the reaction chorismate + L-glutamine = anthranilate + pyruvate + L-glutamate + H(+). It participates in amino-acid biosynthesis; L-tryptophan biosynthesis; L-tryptophan from chorismate: step 1/5. Functionally, part of a heterotetrameric complex that catalyzes the two-step biosynthesis of anthranilate, an intermediate in the biosynthesis of L-tryptophan. In the first step, the glutamine-binding beta subunit (TrpG) of anthranilate synthase (AS) provides the glutamine amidotransferase activity which generates ammonia as a substrate that, along with chorismate, is used in the second step, catalyzed by the large alpha subunit of AS (TrpE) to produce anthranilate. In the absence of TrpG, TrpE can synthesize anthranilate directly from chorismate and high concentrations of ammonia. In Leptospira biflexa, this protein is Anthranilate synthase component 2 (trpG).